The sequence spans 373 residues: Chemerin-like receptor 1 (373 aa).

The Extracellular portion of the chain corresponds to 1 to 41; sequence MRMEDEDYNTSISYGDEYPDYLDSIVVLEDLSPLEARVTRI. Asparagine 9 carries an N-linked (GlcNAc...) asparagine glycan. The helical transmembrane segment at 42–64 threads the bilayer; the sequence is FLVVVYSIVCFLGILGNGLVIII. Topologically, residues 65–75 are cytoplasmic; it reads ATFKMKKTVNM. The helical transmembrane segment at 76-97 threads the bilayer; it reads VWFLNLAVADFLFNVFLPIHIT. Over 98–114 the chain is Extracellular; it reads YAAMDYHWVFGTAMCKI. Cysteine 112 and cysteine 189 are joined by a disulfide. A helical membrane pass occupies residues 115-135; the sequence is SNFLLIHNMFTSVFLLTIISS. Residues 136 to 154 lie on the Cytoplasmic side of the membrane; sequence DRCISVLLPVWSQNHRSVR. Residues 155–176 form a helical membrane-spanning segment; sequence LAYMACMVIWVLAFFLSSPSLV. The Extracellular segment spans residues 177–224; the sequence is FRDTANLHGKISCFNNFSLSTPGSSSWPTHSQMDPVGYSRHMVVTVTR. Residue asparagine 192 is glycosylated (N-linked (GlcNAc...) asparagine). A helical transmembrane segment spans residues 225–245; the sequence is FLCGFLVPVLIITACYLTIVC. At 246 to 261 the chain is on the cytoplasmic side; the sequence is KLQRNRLAKTKKPFKI. Residues 262–282 traverse the membrane as a helical segment; that stretch reads IVTIIITFFLCWCPYHTLNLL. The Extracellular portion of the chain corresponds to 283–300; it reads ELHHTAMPGSVFSLGLPL. The chain crosses the membrane as a helical span at residues 301-320; that stretch reads ATALAIANSCMNPILYVFMG. The Cytoplasmic portion of the chain corresponds to 321 to 373; the sequence is QDFKKFKVALFSRLVNALSEDTGHSSYPSHRSFTKMSSMNERTSMNERETGML. Position 339 is a phosphoserine (serine 339). A disordered region spans residues 341-373; sequence DTGHSSYPSHRSFTKMSSMNERTSMNERETGML. The residue at position 342 (threonine 342) is a Phosphothreonine. Positions 344-363 are enriched in polar residues; the sequence is HSSYPSHRSFTKMSSMNERT. Phosphoserine occurs at positions 349, 352, and 358. The span at 364–373 shows a compositional bias: basic and acidic residues; that stretch reads SMNERETGML.

The protein belongs to the chemokine-like receptor (CMKLR) family. As to expression, prominently expressed in developing osseous and cartilaginous tissue. Also found in adult parathyroid glands. Expressed in cardiovascular system, brain, kidney, gastrointestinal tissues and myeloid tissues. Expressed in a broad array of tissues associated with hematopoietic and immune function including, spleen, thymus, appendix, lymph node, bone marrow and fetal liver. Among leukocyte populations abundant expression in monocyte-derived macrophage and immature dendritic cells (DCs). High expression in blood monocytes and low levels in polymorphonuclear cells and T-cells. Expressed on endothelial cells. Highly expressed in differentiating adipocytes.

It is found in the cell membrane. Receptor for the chemoattractant adipokine chemerin/RARRES2 and for the omega-3 fatty acid derived molecule resolvin E1. Interaction with RARRES2 initiates activation of G proteins G(i)/G(o) and beta-arrestin pathways inducing cellular responses via second messenger pathways such as intracellular calcium mobilization, phosphorylation of MAP kinases MAPK1/MAPK3 (ERK1/2), TYRO3, MAPK14/P38MAPK and PI3K leading to multifunctional effects, like reduction of immune responses, enhancing of adipogenesis and angionesis. Resolvin E1 down-regulates cytokine production in macrophages by reducing the activation of MAPK1/3 (ERK1/2) and NF-kappa-B. Positively regulates adipogenesis and adipocyte metabolism. Functionally, (Microbial infection) Acts as a coreceptor for several SIV strains (SIVMAC316, SIVMAC239, SIVMACL7E-FR and SIVSM62A), as well as a primary HIV-1 strain (92UG024-2). The polypeptide is Chemerin-like receptor 1 (Homo sapiens (Human)).